Here is a 384-residue protein sequence, read N- to C-terminus: A-type ATP synthase subunit C (384 aa).

Belongs to the V-ATPase V0D/AC39 subunit family. Has multiple subunits with at least A(3), B(3), C, D, E, F, H, I and proteolipid K(x).

The protein resides in the cell membrane. Its function is as follows. Component of the A-type ATP synthase that produces ATP from ADP in the presence of a proton gradient across the membrane. The chain is A-type ATP synthase subunit C from Methanobrevibacter smithii (strain ATCC 35061 / DSM 861 / OCM 144 / PS).